The following is a 213-amino-acid chain: NADH-quinone oxidoreductase subunit C (213 aa).

The protein belongs to the complex I 30 kDa subunit family. NDH-1 is composed of 15 different subunits. Subunits NuoB, C, D, E, F, and G constitute the peripheral sector of the complex.

It localises to the cell membrane. It catalyses the reaction a quinone + NADH + 5 H(+)(in) = a quinol + NAD(+) + 4 H(+)(out). NDH-1 shuttles electrons from NADH, via FMN and iron-sulfur (Fe-S) centers, to quinones in the respiratory chain. The immediate electron acceptor for the enzyme in this species is believed to be a menaquinone. Couples the redox reaction to proton translocation (for every two electrons transferred, four hydrogen ions are translocated across the cytoplasmic membrane), and thus conserves the redox energy in a proton gradient. The chain is NADH-quinone oxidoreductase subunit C from Deinococcus geothermalis (strain DSM 11300 / CIP 105573 / AG-3a).